Consider the following 385-residue polypeptide: MNITEGVVELTVPAARDGADAGVGDDVFYNPTQELNRDITVAALRAYQEREPRAETYLDAMTASGVRGVRAAASGYDVTCTDIDPDAVALAQSNLEKNDLDGQTLPSDANAVLHQSGPESPLGPEAIFDVVDLDPFGTPIPFADAAFANARNLVCVTATDTAPLCGAHQQSGIRTYSTLPRNTEYHPEMGLRVLLSALIRTAARYDTAAIPILSHVTRHYVRTYLELDTRATRADELLSDLGYVYHCEDCLTRQHEFGHIAHPPSMCHHCEGNRVITAGPLYLGSIREQGFTRRVRNHITTEMGEIKQADSILKMVENELETPTHYDQHRLCKKWTRSAIGMDEFIEQLHTAGFDATRTHYSGTAFKTNATIAEIRSATTDPDEQ.

The 379-residue stretch at 1-379 (MNITEGVVEL…ATIAEIRSAT (379 aa)) folds into the Trm1 methyltransferase domain. S-adenosyl-L-methionine contacts are provided by R37, R67, D82, D108, and A109. Zn(2+) is bound by residues C247, C250, C267, and C270.

Belongs to the class I-like SAM-binding methyltransferase superfamily. Trm1 family.

The enzyme catalyses guanosine(26) in tRNA + 2 S-adenosyl-L-methionine = N(2)-dimethylguanosine(26) in tRNA + 2 S-adenosyl-L-homocysteine + 2 H(+). In terms of biological role, dimethylates a single guanine residue at position 26 of a number of tRNAs using S-adenosyl-L-methionine as donor of the methyl groups. The chain is tRNA (guanine(26)-N(2))-dimethyltransferase from Haloquadratum walsbyi (strain DSM 16790 / HBSQ001).